The sequence spans 919 residues: 2-oxoadipate dehydrogenase complex component E1 (919 aa).

K183 and K188 each carry N6-succinyllysine. The interval 299 to 320 is disordered; that stretch reads GKTRGRQQSRQDGDYSPDNSAQ. K800 and K818 each carry N6-succinyllysine.

Belongs to the alpha-ketoglutarate dehydrogenase family. As to quaternary structure, the 2-oxoadipate dehydrogenase complex is composed of OADH (2-oxoadipate dehydrogenase; E1a), DLST (dihydrolipoamide succinyltransferase; E2) and DLD (dihydrolipoamide dehydrogenase; E3). E1a functional unit is a dimer. Interacts with DLST. Thiamine diphosphate is required as a cofactor.

The protein localises to the mitochondrion. It catalyses the reaction N(6)-[(R)-lipoyl]-L-lysyl-[protein] + 2-oxoadipate + H(+) = N(6)-[(R)-S(8)-glutaryldihydrolipoyl]-L-lysyl-[protein] + CO2. It functions in the pathway amino-acid degradation. 2-oxoadipate dehydrogenase (E1a) component of the 2-oxoadipate dehydrogenase complex (OADHC). Participates in the first step, rate limiting for the overall conversion of 2-oxoadipate (alpha-ketoadipate) to glutaryl-CoA and CO(2) catalyzed by the whole OADHC. Catalyzes the irreversible decarboxylation of 2-oxoadipate via the thiamine diphosphate (ThDP) cofactor and subsequent transfer of the decarboxylated acyl intermediate on an oxidized dihydrolipoyl group that is covalently amidated to the E2 enzyme (dihydrolipoyllysine-residue succinyltransferase or DLST). Can catalyze the decarboxylation of 2-oxoglutarate in vitro, but at a much lower rate than 2-oxoadipate. Responsible for the last step of L-lysine, L-hydroxylysine and L-tryptophan catabolism with the common product being 2-oxoadipate. The polypeptide is 2-oxoadipate dehydrogenase complex component E1 (DHTKD1) (Homo sapiens (Human)).